The sequence spans 136 residues: uncharacterized protein (136 aa).

Residues Ala14–Phe34 traverse the membrane as a helical segment.

It is found in the membrane. This is an uncharacterized protein from Mycoplasma genitalium (strain ATCC 33530 / DSM 19775 / NCTC 10195 / G37) (Mycoplasmoides genitalium).